Reading from the N-terminus, the 297-residue chain is HTH-type transcriptional regulator ArgP (297 aa).

The region spanning 4–60 (PDYRTLQALDAVIRERGFERAAQKLCITQSAVSQRIKQLENMFGQPLLVRTVPPRPT) is the HTH lysR-type domain. A DNA-binding region (H-T-H motif) is located at residues 21–40 (FERAAQKLCITQSAVSQRIK).

Belongs to the LysR transcriptional regulatory family. As to quaternary structure, homodimer.

Its function is as follows. Controls the transcription of genes involved in arginine and lysine metabolism. The protein is HTH-type transcriptional regulator ArgP of Salmonella dublin (strain CT_02021853).